Here is a 498-residue protein sequence, read N- to C-terminus: Cytochrome P450 71B31 (498 aa).

The chain crosses the membrane as a helical span at residues 3 to 23 (MFLGLLFLFPLFFILFKNLLP). Residue Cys-441 coordinates heme.

It belongs to the cytochrome P450 family. The cofactor is heme.

It is found in the membrane. This chain is Cytochrome P450 71B31 (CYP71B31), found in Arabidopsis thaliana (Mouse-ear cress).